Here is a 413-residue protein sequence, read N- to C-terminus: Protein LAZY 1 (413 aa).

Residues 71-91 form a helical membrane-spanning segment; it reads FTFGGSGLLTIGTLGIAAVAV. Over residues 103 to 124 the composition is skewed to acidic residues; the sequence is DADADSDFDDNDDTAGDDEDQV. Disordered stretches follow at residues 103-127 and 261-308; these read DADA…VDSA and EDGG…ASAT. 2 consecutive short sequence motifs (nuclear localization signal) follow at residues 275-298 and 338-345; these read RKAG…EKVP and KKSRKRGS.

The protein belongs to the LAZY family. Expressed in the node of the stem, initiating leaf founder cells, young leaf primordia, tips of axillary meristems, spikelet pair meristems of developing tassels and ears, male flower primordia, tassels, ears, silks and seeds. Expressed in leaf sheaths, leaf pulvinus and shoot apical meristem (SAM).

The protein resides in the cell membrane. It is found in the nucleus. Its function is as follows. Involved in the regulation of shoot gravitropism, and tassel and ear development through the regulation of polar auxin transport (PAT) and auxin signaling. Acts as a negative regulator of basipetal PAT, but positive regulator of lateral auxin transport. Involved in the regulation of shoot gravitropism and leaf angle through the regulation of cell development. This chain is Protein LAZY 1, found in Zea mays (Maize).